Here is a 140-residue protein sequence, read N- to C-terminus: Large ribosomal subunit protein uL14 (140 aa).

This sequence belongs to the universal ribosomal protein uL14 family.

The polypeptide is Large ribosomal subunit protein uL14 (RPL23) (Brugia malayi (Filarial nematode worm)).